Here is a 660-residue protein sequence, read N- to C-terminus: Methionine--tRNA ligase 1 (660 aa).

Positions 15–25 (YYPSGKLHIGH) match the 'HIGH' region motif. The short motif at 310–314 (KMSKS) is the 'KMSKS' region element. Residue K313 participates in ATP binding. Residues 560–660 (DFFKVELRVA…QNIPNGTKIK (101 aa)) enclose the tRNA-binding domain.

This sequence belongs to the class-I aminoacyl-tRNA synthetase family. MetG type 2B subfamily. As to quaternary structure, homodimer.

It is found in the cytoplasm. The catalysed reaction is tRNA(Met) + L-methionine + ATP = L-methionyl-tRNA(Met) + AMP + diphosphate. Is required not only for elongation of protein synthesis but also for the initiation of all mRNA translation through initiator tRNA(fMet) aminoacylation. The chain is Methionine--tRNA ligase 1 from Bacillus anthracis.